The sequence spans 75 residues: MELEGLKFLGIGLSVVGMLGAAIGVSNIFSMMLNGIARNPESEEKLKKYVYAGAALTEAMGLFSFVLALLLIFVA.

Transmembrane regions (helical) follow at residues 8–28 (FLGIGLSVVGMLGAAIGVSNI) and 54–74 (AALTEAMGLFSFVLALLLIFV).

Belongs to the ATPase C chain family. F-type ATPases have 2 components, F(1) - the catalytic core - and F(0) - the membrane proton channel. F(1) has five subunits: alpha(3), beta(3), gamma(1), delta(1), epsilon(1). F(0) has three main subunits: a(1), b(2) and c(10-14). The alpha and beta chains form an alternating ring which encloses part of the gamma chain. F(1) is attached to F(0) by a central stalk formed by the gamma and epsilon chains, while a peripheral stalk is formed by the delta and b chains.

Its subcellular location is the cell inner membrane. Functionally, f(1)F(0) ATP synthase produces ATP from ADP in the presence of a proton or sodium gradient. F-type ATPases consist of two structural domains, F(1) containing the extramembraneous catalytic core and F(0) containing the membrane proton channel, linked together by a central stalk and a peripheral stalk. During catalysis, ATP synthesis in the catalytic domain of F(1) is coupled via a rotary mechanism of the central stalk subunits to proton translocation. In terms of biological role, key component of the F(0) channel; it plays a direct role in translocation across the membrane. A homomeric c-ring of between 10-14 subunits forms the central stalk rotor element with the F(1) delta and epsilon subunits. The protein is ATP synthase subunit c of Neorickettsia sennetsu (strain ATCC VR-367 / Miyayama) (Ehrlichia sennetsu).